Consider the following 276-residue polypeptide: Rhomboid protease GlpG (276 aa).

6 helical membrane-spanning segments follow: residues 94–114, 142–162, 169–189, 192–212, 229–249, and 250–270; these read GPVT…MSLI, IFMH…WYLG, LGSG…GYVQ, FSGP…GYVW, LIIF…GMSM, and ANGA…VDTL. Ser201 acts as the Nucleophile in catalysis. His254 is an active-site residue.

Belongs to the peptidase S54 family.

It is found in the cell inner membrane. The enzyme catalyses Cleaves type-1 transmembrane domains using a catalytic dyad composed of serine and histidine that are contributed by different transmembrane domains.. Rhomboid-type serine protease that catalyzes intramembrane proteolysis. In Salmonella dublin (strain CT_02021853), this protein is Rhomboid protease GlpG.